The following is a 244-amino-acid chain: Probable transcriptional regulatory protein Dgeo_2194 (244 aa).

Residues 1 to 21 are disordered; the sequence is MAGHSKWAQIKRKKGANDKKR.

This sequence belongs to the TACO1 family.

The protein localises to the cytoplasm. The protein is Probable transcriptional regulatory protein Dgeo_2194 of Deinococcus geothermalis (strain DSM 11300 / CIP 105573 / AG-3a).